A 487-amino-acid chain; its full sequence is 1-hydroxycarotenoid 3,4-desaturase (487 aa).

Residues Gly-12, Glu-31, Lys-39, 55–56 (SL), Val-247, Asn-275, Leu-431, Gly-461, and 468–469 (GI) contribute to the FAD site.

This sequence belongs to the carotenoid/retinoid oxidoreductase family. Monomer.

The catalysed reaction is rhodopin + A = (3E)-3,4-didehydrorhodopin + AH2. It catalyses the reaction 1'-hydroxy-gamma-carotene + A = 1'-hydroxytorulene + AH2. It carries out the reaction 1-hydroxy-all-trans-1,2-dihydro-neurosporene + A = demethylspheroidene + AH2. The enzyme catalyses 1,1'-dihydroxy-1,1',2,2'-tetrahydroneurosporene + A = 1'-hydroxy-demethylspheroidene + AH2. The catalysed reaction is 1,1'-dihydroxy-1,1',2,2'-tetrahydrolycopene + A = 1,1'-dihydroxy-3,4-didehydro-1,2-dihydrolycopene + AH2. Its pathway is carotenoid biosynthesis. Its function is as follows. Catalyzes the introduction of a C-3,4 double bond into 1'-hydroxy-gamma-carotene and rhodopin (1-hydroxylycopene) to yield 1'-hydroxytorulene and (3E)-3,4-didehydrorhodopin, respectively. Can also use 1-hydroxy-all-trans-1,2-dihydro-neurosporene, 1,1'-dihydroxy-1,1',2,2'-tetrahydroneurosporene and 1,1'-dihydroxy-1,1',2,2'-tetrahydrolycopene. Probably involved in the synthesis of myxol, a gamma-carotene derivative. May use FAD as a proton acceptor. The chain is 1-hydroxycarotenoid 3,4-desaturase from Nonlabens dokdonensis (strain DSM 17205 / KCTC 12402 / DSW-6) (Donghaeana dokdonensis).